Consider the following 461-residue polypeptide: High-affinity Na(+)/H(+) antiporter NhaS3 (461 aa).

11 consecutive transmembrane segments (helical) span residues 22 to 42, 58 to 78, 113 to 133, 148 to 170, 175 to 197, 209 to 229, 239 to 259, 280 to 300, 360 to 380, 391 to 411, and 424 to 444; these read TEIA…IYFA, VLGE…LLLF, SEVI…EIGL, AIVA…MTIF, IPAI…KVLA, IIIG…AVVG, ISNI…SILI, LLLV…IVQL, GLII…VTGF, LAIG…AGVG, and AIIV…RAVF.

This sequence belongs to the monovalent cation:proton antiporter 2 (CPA2) transporter (TC 2.A.37) family.

The protein localises to the cellular thylakoid membrane. Functionally, na(+)/H(+) antiporter that transports sodium from the cytoplasm into the thylakoid lumen in exchange for protons. Contributes to sodium homeostasis and tolerance. Also has Li(+)/H(+) antiport activity under K(+)-free conditions, but not under K(+)-rich conditions. This Synechocystis sp. (strain ATCC 27184 / PCC 6803 / Kazusa) protein is High-affinity Na(+)/H(+) antiporter NhaS3 (nhaS3).